Reading from the N-terminus, the 474-residue chain is Ribulose bisphosphate carboxylase large chain (474 aa).

Residues N122 and T172 each coordinate substrate. K174 serves as the catalytic Proton acceptor. Residue K176 participates in substrate binding. The Mg(2+) site is built by K200, D202, and E203. At K200 the chain carries N6-carboxylysine. The active-site Proton acceptor is H293. Positions 294, 326, and 378 each coordinate substrate.

It belongs to the RuBisCO large chain family. Type I subfamily. Heterohexadecamer of 8 large chains and 8 small chains; disulfide-linked. The disulfide link is formed within the large subunit homodimers. The cofactor is Mg(2+). Post-translationally, the disulfide bond which can form in the large chain dimeric partners within the hexadecamer appears to be associated with oxidative stress and protein turnover.

The protein localises to the carboxysome. The catalysed reaction is 2 (2R)-3-phosphoglycerate + 2 H(+) = D-ribulose 1,5-bisphosphate + CO2 + H2O. The enzyme catalyses D-ribulose 1,5-bisphosphate + O2 = 2-phosphoglycolate + (2R)-3-phosphoglycerate + 2 H(+). Its function is as follows. RuBisCO catalyzes two reactions: the carboxylation of D-ribulose 1,5-bisphosphate, the primary event in carbon dioxide fixation, as well as the oxidative fragmentation of the pentose substrate in the photorespiration process. Both reactions occur simultaneously and in competition at the same active site. This chain is Ribulose bisphosphate carboxylase large chain, found in Synechococcus sp. (strain JA-3-3Ab) (Cyanobacteria bacterium Yellowstone A-Prime).